A 210-amino-acid polypeptide reads, in one-letter code: MTQAAIDYNKLKSAPVHLDAYIKSIDSESKEGVVKIRGFANTISKDRAGDVIPASAWKTSNALTNYMKNPIILFGHDHRRPIGKCIDLNPTEMGLEIECEINESSDPAIFSLIKNGVLKTFSIGFRCLDAEWDEATDIFIIKDLELYEVSVVSVPCNQDSTFNLAKSMNGHDYTEWRKSFTAISSKAVPAQERNLSELEKLAIALGYVKE.

Residues 1-23 (MTQAAIDYNKLKSAPVHLDAYIK) constitute a propeptide that is removed on maturation. Active-site residues include His-76, Ser-122, and Glu-148. The propeptide occupies 167-210 (SMNGHDYTEWRKSFTAISSKAVPAQERNLSELEKLAIALGYVKE).

The protein belongs to the HK97 prohead protease protein family. Post-translationally, cleaves itself autocatalytically to yield the mature form of the protease.

The protein resides in the virion. Its function is as follows. Serine protease involved in capsid assembly and maturation. Cleaves the major capsid protein, the decoration protein, the portal protein to yield mature procapsids competent for DNA packaging. Acts as a trigger for assembly of the capsid protein. In Escherichia coli (Enterobacteria phage T5), this protein is Prohead protease.